The sequence spans 318 residues: Nitrate reductase [NADH] (318 aa).

The Cytochrome b5 heme-binding domain occupies 216-291; it reads AKSFTMAEVE…LLEYYIGELA (76 aa). 2 residues coordinate heme: His-251 and His-274.

The protein belongs to the nitrate reductase family. As to quaternary structure, homodimer. FAD serves as cofactor. It depends on heme as a cofactor. The cofactor is Mo-molybdopterin.

It carries out the reaction nitrite + NAD(+) + H2O = nitrate + NADH + H(+). Its function is as follows. Nitrate reductase is a key enzyme involved in the first step of nitrate assimilation in plants, fungi and bacteria. This is Nitrate reductase [NADH] from Chlorella vulgaris (Green alga).